A 376-amino-acid chain; its full sequence is Homeobox protein extradenticle (376 aa).

A disordered region spans residues 16-35; it reads APQGYSLSGQDDGQNTGNEN. A compositionally biased stretch (polar residues) spans 20–34; that stretch reads YSLSGQDDGQNTGNE. The 200-residue stretch at 38–237 folds into the PBC domain; it reads RKQKDIGEIL…VMILRSRFLD (200 aa). The interval 45–124 is PBC-A; that stretch reads EILQQIMSIS…EGVAGPEKGG (80 aa). The interval 127–237 is PBC-B; sequence AAAASAAAAS…VMILRSRFLD (111 aa). Residues 238–300 constitute a DNA-binding region (homeobox; TALE-type); that stretch reads ARRKRRNFSK…NKRIRYKKNI (63 aa). A compositionally biased stretch (low complexity) spans 318 to 335; the sequence is ASPYSMAGPPSGTTTPMM. Residues 318 to 376 are disordered; the sequence is ASPYSMAGPPSGTTTPMMSPAPPQDSMGYTMGSGGYDQQQPYDNSMGGYDPNLHQDLSP.

The protein belongs to the TALE/PBX homeobox family. As to quaternary structure, interacts with Ubx and hth.

The protein localises to the nucleus. Its function is as follows. Transcription factor which acts with the selector homeodomain proteins altering the regulation of downstream target genes such as wingless (wg), teashirt (tsh) and decapentaplegic (dpp), thus affecting segmental identity. Delimits the eye field and prevent inappropriate eye development. Required for proper localization of chordotonal organs within the peripheral nervous system. The polypeptide is Homeobox protein extradenticle (Drosophila pseudoobscura pseudoobscura (Fruit fly)).